The sequence spans 247 residues: 2,3-bisphosphoglycerate-dependent phosphoglycerate mutase (247 aa).

Residues 8–15, 21–22, arginine 60, 87–90, lysine 98, 114–115, and 183–184 contribute to the substrate site; these read RHGESQWN, TG, ERHY, RR, and GN. Histidine 9 serves as the catalytic Tele-phosphohistidine intermediate. Glutamate 87 serves as the catalytic Proton donor/acceptor.

This sequence belongs to the phosphoglycerate mutase family. BPG-dependent PGAM subfamily.

It catalyses the reaction (2R)-2-phosphoglycerate = (2R)-3-phosphoglycerate. The protein operates within carbohydrate degradation; glycolysis; pyruvate from D-glyceraldehyde 3-phosphate: step 3/5. Catalyzes the interconversion of 2-phosphoglycerate and 3-phosphoglycerate. This is 2,3-bisphosphoglycerate-dependent phosphoglycerate mutase from Prosthecochloris aestuarii (strain DSM 271 / SK 413).